Reading from the N-terminus, the 78-residue chain is Small integral membrane protein 5 (78 aa).

The chain crosses the membrane as a helical span at residues 32–52; that stretch reads ILAFSVLVVFTATVVLLLLIA.

It is found in the membrane. In Bos taurus (Bovine), this protein is Small integral membrane protein 5 (SMIM5).